The primary structure comprises 905 residues: Probable coatomer subunit gamma (905 aa).

5 HEAT repeats span residues 265 to 302 (TQFRDQMVPFLHGWLKSKGDMVNLEVARNMVRLKNISD), 303 to 340 (DDLQPVVSVLKIFLSSHRSATRFSAIRTLNELAMTRPH), 374 to 412 (DESVDRLMKQIVTFMSDISDNFKIIVVDAIRSLCLKFPR), 414 to 450 (QDSMLTFLSNILCDEGGYEFKRAAVDAISDMIKYIPE), and 525 to 563 (KFVQRSVKVILTRCLEDADDEVRDRAAFSVKALEDRDAF). Residue serine 604 is modified to Phosphoserine.

It belongs to the COPG family. In terms of assembly, oligomeric complex that consists of at least the alpha, beta, beta', gamma, delta, epsilon and zeta subunits.

It localises to the cytoplasm. It is found in the golgi apparatus membrane. The protein localises to the cytoplasmic vesicle. Its subcellular location is the COPI-coated vesicle membrane. The coatomer is a cytosolic protein complex that binds to dilysine motifs and reversibly associates with Golgi non-clathrin-coated vesicles, which further mediate biosynthetic protein transport from the ER, via the Golgi up to the trans Golgi network. Coatomer complex is required for budding from Golgi membranes, and is essential for the retrograde Golgi-to-ER transport of dilysine-tagged proteins. This chain is Probable coatomer subunit gamma (sec21), found in Schizosaccharomyces pombe (strain 972 / ATCC 24843) (Fission yeast).